A 383-amino-acid polypeptide reads, in one-letter code: 1-deoxy-D-xylulose 5-phosphate reductoisomerase (383 aa).

NADPH contacts are provided by Thr10, Gly11, Ser12, Ile13, Gly36, Lys37, Asn38, and Asn122. Lys123 provides a ligand contact to 1-deoxy-D-xylulose 5-phosphate. Position 124 (Glu124) interacts with NADPH. Residue Asp148 coordinates Mn(2+). Ser149, Glu150, Ser174, and His197 together coordinate 1-deoxy-D-xylulose 5-phosphate. Glu150 contributes to the Mn(2+) binding site. Gly203 provides a ligand contact to NADPH. Positions 210, 215, 216, and 219 each coordinate 1-deoxy-D-xylulose 5-phosphate. Mn(2+) is bound at residue Glu219.

This sequence belongs to the DXR family. Mg(2+) serves as cofactor. Mn(2+) is required as a cofactor.

The catalysed reaction is 2-C-methyl-D-erythritol 4-phosphate + NADP(+) = 1-deoxy-D-xylulose 5-phosphate + NADPH + H(+). It functions in the pathway isoprenoid biosynthesis; isopentenyl diphosphate biosynthesis via DXP pathway; isopentenyl diphosphate from 1-deoxy-D-xylulose 5-phosphate: step 1/6. Functionally, catalyzes the NADPH-dependent rearrangement and reduction of 1-deoxy-D-xylulose-5-phosphate (DXP) to 2-C-methyl-D-erythritol 4-phosphate (MEP). This chain is 1-deoxy-D-xylulose 5-phosphate reductoisomerase, found in Bacillus licheniformis (strain ATCC 14580 / DSM 13 / JCM 2505 / CCUG 7422 / NBRC 12200 / NCIMB 9375 / NCTC 10341 / NRRL NRS-1264 / Gibson 46).